The sequence spans 91 residues: Small ribosomal subunit protein bS18 (91 aa).

The protein belongs to the bacterial ribosomal protein bS18 family. In terms of assembly, part of the 30S ribosomal subunit. Forms a tight heterodimer with protein bS6.

In terms of biological role, binds as a heterodimer with protein bS6 to the central domain of the 16S rRNA, where it helps stabilize the platform of the 30S subunit. This is Small ribosomal subunit protein bS18 from Gluconacetobacter diazotrophicus (strain ATCC 49037 / DSM 5601 / CCUG 37298 / CIP 103539 / LMG 7603 / PAl5).